Reading from the N-terminus, the 292-residue chain is Shikimate dehydrogenase (NADP(+)) (292 aa).

Residues 22–24 and Ser-69 each bind shikimate; that span reads SLS. Lys-73 functions as the Proton acceptor in the catalytic mechanism. The shikimate site is built by Asn-94 and Asp-111. Residues 135-139 and Ile-236 contribute to the NADP(+) site; that span reads GVGGA. A shikimate-binding site is contributed by Tyr-238. Position 260 (Gly-260) interacts with NADP(+).

Belongs to the shikimate dehydrogenase family. Homodimer.

The catalysed reaction is shikimate + NADP(+) = 3-dehydroshikimate + NADPH + H(+). It functions in the pathway metabolic intermediate biosynthesis; chorismate biosynthesis; chorismate from D-erythrose 4-phosphate and phosphoenolpyruvate: step 4/7. Involved in the biosynthesis of the chorismate, which leads to the biosynthesis of aromatic amino acids. Catalyzes the reversible NADPH linked reduction of 3-dehydroshikimate (DHSA) to yield shikimate (SA). The chain is Shikimate dehydrogenase (NADP(+)) from Streptococcus pyogenes serotype M28 (strain MGAS6180).